Consider the following 198-residue polypeptide: Putative 3-methyladenine DNA glycosylase (198 aa).

It belongs to the DNA glycosylase MPG family.

The protein is Putative 3-methyladenine DNA glycosylase of Oceanobacillus iheyensis (strain DSM 14371 / CIP 107618 / JCM 11309 / KCTC 3954 / HTE831).